The chain runs to 362 residues: Dihydroorotate dehydrogenase (quinone) (362 aa).

Residues 62 to 66 (AGYDK) and threonine 86 each bind FMN. A substrate-binding site is contributed by lysine 66. 111-115 (NRLGF) is a substrate binding site. Residues asparagine 139 and asparagine 170 each contribute to the FMN site. Position 170 (asparagine 170) interacts with substrate. Serine 173 (nucleophile) is an active-site residue. Asparagine 175 provides a ligand contact to substrate. Residues lysine 215 and serine 243 each coordinate FMN. 244 to 245 (NT) contributes to the substrate binding site. FMN is bound by residues glycine 266, glycine 295, and 316–317 (YS).

This sequence belongs to the dihydroorotate dehydrogenase family. Type 2 subfamily. Monomer. FMN serves as cofactor.

Its subcellular location is the cell membrane. The catalysed reaction is (S)-dihydroorotate + a quinone = orotate + a quinol. Its pathway is pyrimidine metabolism; UMP biosynthesis via de novo pathway; orotate from (S)-dihydroorotate (quinone route): step 1/1. Functionally, catalyzes the conversion of dihydroorotate to orotate with quinone as electron acceptor. The polypeptide is Dihydroorotate dehydrogenase (quinone) (Rhizobium rhizogenes (strain K84 / ATCC BAA-868) (Agrobacterium radiobacter)).